We begin with the raw amino-acid sequence, 295 residues long: MRNRIEQALQQMPASFAPYLRELVLAKDFDATFSAEQYQQLLTLSGLEDADLRVALLPIAAAYSYAPISEFYVGAIVRGISGRLYLGANMEFTGAQLGQTVHAEQCAISHAWMKGEKGVADITINFSPCGHCRQFMNELTTASSLKIQLPKRAAKTLQEYLPESFGPADLGIDSGLMSPVNHGKTSDDDEELIQQALRAMNISHSPYTQNFSGVALKMRSGAIYLGAYAENAAFNPSLPPLQVALAQAMMMGESFEDIEAAALVESATGKISHLADTQATLEVINPDIPLSYLSL.

CMP/dCMP-type deaminase domains follow at residues 48 to 168 (EDAD…FGPA) and 187 to 295 (DDDE…YLSL). 89 to 91 (NME) is a substrate binding site. His-102 is a Zn(2+) binding site. Glu-104 serves as the catalytic Proton donor. Cys-129 and Cys-132 together coordinate Zn(2+).

It belongs to the cytidine and deoxycytidylate deaminase family. Homodimer. It depends on Zn(2+) as a cofactor.

It carries out the reaction cytidine + H2O + H(+) = uridine + NH4(+). It catalyses the reaction 2'-deoxycytidine + H2O + H(+) = 2'-deoxyuridine + NH4(+). This enzyme scavenges exogenous and endogenous cytidine and 2'-deoxycytidine for UMP synthesis. This is Cytidine deaminase from Vibrio cholerae serotype O1 (strain ATCC 39315 / El Tor Inaba N16961).